A 160-amino-acid chain; its full sequence is Lipoprotein signal peptidase (160 aa).

The next 3 membrane-spanning stretches (helical) occupy residues 5–25, 60–80, and 84–104; these read LVFFVSTACGILADQLSKFII, IEWLIAASVLGVILAMTAFFI, and LPFLDTRPGLIALGVILAGTV. Active-site residues include Asp118 and Asp132. The helical transmembrane segment at 128–148 threads the bilayer; sequence FNIADSCLTVGVIGLLLLYIV.

Belongs to the peptidase A8 family.

Its subcellular location is the cell membrane. The enzyme catalyses Release of signal peptides from bacterial membrane prolipoproteins. Hydrolyzes -Xaa-Yaa-Zaa-|-(S,diacylglyceryl)Cys-, in which Xaa is hydrophobic (preferably Leu), and Yaa (Ala or Ser) and Zaa (Gly or Ala) have small, neutral side chains.. The protein operates within protein modification; lipoprotein biosynthesis (signal peptide cleavage). This protein specifically catalyzes the removal of signal peptides from prolipoproteins. The polypeptide is Lipoprotein signal peptidase (Dehalococcoides mccartyi (strain ATCC BAA-2100 / JCM 16839 / KCTC 5957 / BAV1)).